Reading from the N-terminus, the 205-residue chain is Low-density lipoprotein receptor class A domain-containing protein 1 (205 aa).

Residues leucine 43–proline 63 form a helical membrane-spanning segment. In terms of domain architecture, LDL-receptor class A 1 spans alanine 71–arginine 114. Cystine bridges form between cysteine 72/cysteine 89, cysteine 83/cysteine 102, cysteine 96/cysteine 113, cysteine 141/cysteine 160, cysteine 163/cysteine 180, and cysteine 170/cysteine 193. The LDL-receptor class A 2; atypical domain occupies aspartate 115 to proline 161. Positions proline 162–proline 203 constitute an LDL-receptor class A 3; atypical domain.

This sequence belongs to the LDLR family.

The protein resides in the membrane. The polypeptide is Low-density lipoprotein receptor class A domain-containing protein 1 (LDLRAD1) (Homo sapiens (Human)).